A 517-amino-acid polypeptide reads, in one-letter code: GMP synthase [glutamine-hydrolyzing] (517 aa).

The Glutamine amidotransferase type-1 domain occupies 9 to 199 (RILILDFGSQ…VLGICGCERL (191 aa)). Residue Cys-86 is the Nucleophile of the active site. Active-site residues include His-173 and Glu-175. One can recognise a GMPS ATP-PPase domain in the interval 200-392 (WTSESIIEDA…LGLPYEMLYR (193 aa)). 227–233 (SGGVDSS) is a binding site for ATP.

As to quaternary structure, homodimer.

The enzyme catalyses XMP + L-glutamine + ATP + H2O = GMP + L-glutamate + AMP + diphosphate + 2 H(+). It participates in purine metabolism; GMP biosynthesis; GMP from XMP (L-Gln route): step 1/1. In terms of biological role, catalyzes the synthesis of GMP from XMP. This Vibrio vulnificus (strain CMCP6) protein is GMP synthase [glutamine-hydrolyzing].